Consider the following 143-residue polypeptide: Transcriptional regulator MraZ (143 aa).

2 consecutive SpoVT-AbrB domains span residues 5 to 47 and 76 to 119; these read TYTP…PRAE and TDEQ…DAAA.

It belongs to the MraZ family. As to quaternary structure, forms oligomers.

The protein localises to the cytoplasm. It is found in the nucleoid. This Mycobacterium sp. (strain JLS) protein is Transcriptional regulator MraZ.